A 124-amino-acid chain; its full sequence is Prefoldin subunit beta (124 aa).

This sequence belongs to the prefoldin subunit beta family. Heterohexamer of two alpha and four beta subunits.

Its subcellular location is the cytoplasm. Its function is as follows. Molecular chaperone capable of stabilizing a range of proteins. Seems to fulfill an ATP-independent, HSP70-like function in archaeal de novo protein folding. This is Prefoldin subunit beta from Pyrobaculum arsenaticum (strain DSM 13514 / JCM 11321 / PZ6).